We begin with the raw amino-acid sequence, 195 residues long: Small ribosomal subunit protein bS16 (195 aa).

Low complexity predominate over residues 171 to 181 (PEAPVAAAEPA). Positions 171 to 195 (PEAPVAAAEPAPEVKAEEKEEGGEA) are disordered.

Belongs to the bacterial ribosomal protein bS16 family.

This chain is Small ribosomal subunit protein bS16, found in Chlorobium luteolum (strain DSM 273 / BCRC 81028 / 2530) (Pelodictyon luteolum).